Consider the following 118-residue polypeptide: Ribonuclease P protein component (118 aa).

It belongs to the RnpA family. Consists of a catalytic RNA component (M1 or rnpB) and a protein subunit.

The catalysed reaction is Endonucleolytic cleavage of RNA, removing 5'-extranucleotides from tRNA precursor.. Its function is as follows. RNaseP catalyzes the removal of the 5'-leader sequence from pre-tRNA to produce the mature 5'-terminus. It can also cleave other RNA substrates such as 4.5S RNA. The protein component plays an auxiliary but essential role in vivo by binding to the 5'-leader sequence and broadening the substrate specificity of the ribozyme. The chain is Ribonuclease P protein component from Levilactobacillus brevis (strain ATCC 367 / BCRC 12310 / CIP 105137 / JCM 1170 / LMG 11437 / NCIMB 947 / NCTC 947) (Lactobacillus brevis).